The sequence spans 510 residues: Glycerol kinase (510 aa).

Position 12 (threonine 12) interacts with ADP. The ATP site is built by threonine 12, threonine 13, and serine 14. Residue threonine 12 coordinates sn-glycerol 3-phosphate. Arginine 16 lines the ADP pocket. Positions 82, 83, and 134 each coordinate sn-glycerol 3-phosphate. Glycerol contacts are provided by arginine 82, glutamate 83, and tyrosine 134. Histidine 230 bears the Phosphohistidine; by HPr mark. Aspartate 244 lines the sn-glycerol 3-phosphate pocket. The glycerol site is built by aspartate 244 and glutamine 245. 2 residues coordinate ADP: threonine 266 and glycine 309. Residues threonine 266, glycine 309, glutamine 313, and glycine 410 each coordinate ATP. Residues glycine 410 and asparagine 414 each contribute to the ADP site.

This sequence belongs to the FGGY kinase family. As to quaternary structure, homotetramer and homodimer (in equilibrium). Post-translationally, the phosphoenolpyruvate-dependent sugar phosphotransferase system (PTS), including enzyme I, and histidine-containing protein (HPr) are required for the phosphorylation, which leads to the activation of the enzyme.

It carries out the reaction glycerol + ATP = sn-glycerol 3-phosphate + ADP + H(+). Its pathway is polyol metabolism; glycerol degradation via glycerol kinase pathway; sn-glycerol 3-phosphate from glycerol: step 1/1. With respect to regulation, activated by phosphorylation and inhibited by fructose 1,6-bisphosphate (FBP). Functionally, key enzyme in the regulation of glycerol uptake and metabolism. Catalyzes the phosphorylation of glycerol to yield sn-glycerol 3-phosphate. The chain is Glycerol kinase from Bacillus cereus (strain ATCC 10987 / NRS 248).